Reading from the N-terminus, the 25-residue chain is M-poneritoxin-Ng1a (25 aa).

As to expression, expressed by the venom gland.

Its subcellular location is the secreted. The protein localises to the target cell membrane. Functionally, has a broad spectrum of activity against both Gram-positive and Gram-negative bacteria and S.cerevisiae. Has insecticidal and hemolytic activities. May act by disrupting the integrity of the bacterial cell membrane. This chain is M-poneritoxin-Ng1a, found in Neoponera goeldii (Ponerine ant).